Consider the following 384-residue polypeptide: Sialyltransferase-like protein 3 (384 aa).

Residues 1–5 are Cytoplasmic-facing; the sequence is MKRRH. A helical; Signal-anchor for type II membrane protein membrane pass occupies residues 6-26; it reads WSHPSCGLLLLVAVFCLLLVF. Over 27-384 the chain is Lumenal; that stretch reads RCSQLRHSGD…FRLPPVSFYR (358 aa). Asparagine 241 carries N-linked (GlcNAc...) asparagine glycosylation.

The protein belongs to the glycosyltransferase 29 family.

The protein localises to the golgi apparatus membrane. Its function is as follows. Possesses sialyltransferase-like activity in vitro. Transfers sialic acid to the glycoprotein asialofetuin. The transferred sialic acid is linked to galactose of Gal-beta-1,3-GalNAc through alpha-2,6-linkage. The polypeptide is Sialyltransferase-like protein 3 (Oryza sativa subsp. indica (Rice)).